We begin with the raw amino-acid sequence, 57 residues long: DNA gyrase inhibitor YacG (57 aa).

The Zn(2+) site is built by cysteine 10, cysteine 13, cysteine 25, and cysteine 29.

The protein belongs to the DNA gyrase inhibitor YacG family. Interacts with GyrB. The cofactor is Zn(2+).

Inhibits all the catalytic activities of DNA gyrase by preventing its interaction with DNA. Acts by binding directly to the C-terminal domain of GyrB, which probably disrupts DNA binding by the gyrase. This is DNA gyrase inhibitor YacG from Brucella abortus (strain 2308).